Consider the following 342-residue polypeptide: Holliday junction branch migration complex subunit RuvB (342 aa).

The large ATPase domain (RuvB-L) stretch occupies residues 1–179; the sequence is MTNILSPEKS…FGIPMRLNFY (179 aa). Residues Ile18, Arg19, Gly60, Lys63, Thr64, Thr65, 126–128, Arg169, Tyr179, and Arg216 each bind ATP; that span reads EDF. Thr64 is a Mg(2+) binding site. The tract at residues 180 to 250 is small ATPAse domain (RuvB-S); the sequence is NTEELKKVLN…VSDFGLNRLE (71 aa). Positions 253–342 are head domain (RuvB-H); it reads RIGLDSNDYR…HQFNIFNENE (90 aa). DNA is bound by residues Arg289, Arg308, and Arg313.

Belongs to the RuvB family. As to quaternary structure, homohexamer. Forms an RuvA(8)-RuvB(12)-Holliday junction (HJ) complex. HJ DNA is sandwiched between 2 RuvA tetramers; dsDNA enters through RuvA and exits via RuvB. An RuvB hexamer assembles on each DNA strand where it exits the tetramer. Each RuvB hexamer is contacted by two RuvA subunits (via domain III) on 2 adjacent RuvB subunits; this complex drives branch migration. In the full resolvosome a probable DNA-RuvA(4)-RuvB(12)-RuvC(2) complex forms which resolves the HJ.

The protein resides in the cytoplasm. It catalyses the reaction ATP + H2O = ADP + phosphate + H(+). The RuvA-RuvB-RuvC complex processes Holliday junction (HJ) DNA during genetic recombination and DNA repair, while the RuvA-RuvB complex plays an important role in the rescue of blocked DNA replication forks via replication fork reversal (RFR). RuvA specifically binds to HJ cruciform DNA, conferring on it an open structure. The RuvB hexamer acts as an ATP-dependent pump, pulling dsDNA into and through the RuvAB complex. RuvB forms 2 homohexamers on either side of HJ DNA bound by 1 or 2 RuvA tetramers; 4 subunits per hexamer contact DNA at a time. Coordinated motions by a converter formed by DNA-disengaged RuvB subunits stimulates ATP hydrolysis and nucleotide exchange. Immobilization of the converter enables RuvB to convert the ATP-contained energy into a lever motion, pulling 2 nucleotides of DNA out of the RuvA tetramer per ATP hydrolyzed, thus driving DNA branch migration. The RuvB motors rotate together with the DNA substrate, which together with the progressing nucleotide cycle form the mechanistic basis for DNA recombination by continuous HJ branch migration. Branch migration allows RuvC to scan DNA until it finds its consensus sequence, where it cleaves and resolves cruciform DNA. This is Holliday junction branch migration complex subunit RuvB from Rickettsia rickettsii (strain Sheila Smith).